The primary structure comprises 258 residues: Pimeloyl-[acyl-carrier protein] methyl ester esterase (258 aa).

The 227-residue stretch at 16 to 242 (LVLLHGWGLN…AAHAPFISHP (227 aa)) folds into the AB hydrolase-1 domain. Residues Trp-22, 82–83 (SM), and 143–147 (FLALQ) contribute to the substrate site. Ser-82 functions as the Nucleophile in the catalytic mechanism. Active-site residues include Asp-207 and His-235. Position 235 (His-235) interacts with substrate.

The protein belongs to the AB hydrolase superfamily. Carboxylesterase BioH family. As to quaternary structure, monomer.

Its subcellular location is the cytoplasm. The catalysed reaction is 6-carboxyhexanoyl-[ACP] methyl ester + H2O = 6-carboxyhexanoyl-[ACP] + methanol + H(+). Its pathway is cofactor biosynthesis; biotin biosynthesis. The physiological role of BioH is to remove the methyl group introduced by BioC when the pimeloyl moiety is complete. It allows to synthesize pimeloyl-ACP via the fatty acid synthetic pathway through the hydrolysis of the ester bonds of pimeloyl-ACP esters. This chain is Pimeloyl-[acyl-carrier protein] methyl ester esterase, found in Yersinia pseudotuberculosis serotype O:1b (strain IP 31758).